The primary structure comprises 341 residues: MPSVSDTDTSLRFPILIGDIGGTNARFSIVLDANSEPTEPQIVQTANFNTIDEAIQAAVLDRSSVRPNSAVLAVAGPVDGDEIELTNCPWVVKPRQMFANLGLSDIVVLNDFEAQALAVVALGEEHMEKIGGGTPEPNAGRVVLGPGTGLGVAGLVYALRHWIPVPGEGGHMDIGPRTPRDFEVFPHIEKLEGRISGEQILCGRGLVNVYRAVAKADGKPAPFTTPAEITGAALAKTDPVAEEALETFVTCLGRTAGDLALVFMSRGGVFLTGGIAQKIVPALKEGNFRAAFEDKAPHSALMRTMPVYVITHPLAALLGLAAYARNPSLFGVQTAGRRWQA.

18–23 (GDIGGT) is a binding site for ATP.

The protein belongs to the bacterial glucokinase family.

Its subcellular location is the cytoplasm. It catalyses the reaction D-glucose + ATP = D-glucose 6-phosphate + ADP + H(+). The chain is Glucokinase from Mesorhizobium japonicum (strain LMG 29417 / CECT 9101 / MAFF 303099) (Mesorhizobium loti (strain MAFF 303099)).